An 837-amino-acid polypeptide reads, in one-letter code: MKTKIFPLNKIAFACSLLLANPLAWAGDQFDASLWGDGSVLGVDFARFNVKNAVLPGRYEAQIYVKFEEKGVSDIIFADNPATGRTELCFTPKLQEMLDLMDEAIVKSPNSEDDTCVFASDAIPKGTFEYQSGEMKLKLELPQALTIRRPRGYIAPSRWQTGTNAAFANYDINYYRSGNPEVKSESLYVGLRSGVNFGNWALRHSGSFSRFENQSSSGFTDKGKNHYERGDTYLQRDFALLRGNVTVGDFFSTARIGENFGMRGLRIASDDRMLAPSQRGFAPVVRGVANTNAKVSIKQNGYTIYQITVPAGPFVINDLYASGYSGDLTVEIQESDGKVRSFIVPFSNLAPLMRVGHLRYQLAGGRYRIDSRTFDERVLQGVLQYGLTNHLTLNSSLLYTRHYRAGLFGFGLNTPIGAFSADATWSHAEFPLKHVSKNGYSLHGSYSINFNESGTNITLAAYRYSSRDFYTLSDTIGLNRTFRQFSGAYLPEIYRPKNQFQVSLSQSLGNWGNLYLSGQTYNYWEKRGTNTQYQVAYSNSFHILNYSVNLSQSIDKETGKRDNSIYLSLSLPLGDNHSADSSYSRSGNDINQRLGVNGSFGERHQWSYGINASRNNQGYRSYDGNLSHNNSIGSYRASYSRDSLKNRSISLGASGAVVAHKHGITLSQPVGESFAIIHAKDAAGAKVESGANVSLDYFGNAVMPYTSPYEINYIGINPSDAEANVEFEATERQIIPRANSISLVDFRTGKNTMVLFNLTLPNGEPVPMASTAQDSEGAFVGDVVQGGVLFANKLTQPKGELIVKWGERESEQCRFQYQVDLDNAQIQSHDIQCKTAK.

The first 26 residues, 1 to 26 (MKTKIFPLNKIAFACSLLLANPLAWA), serve as a signal peptide directing secretion. The cysteines at positions 813 and 833 are disulfide-linked.

This sequence belongs to the fimbrial export usher family.

It is found in the cell outer membrane. Functionally, essential for piliation. In Haemophilus influenzae, this protein is Outer membrane usher protein HifC (hifC).